Here is a 1189-residue protein sequence, read N- to C-terminus: Pumilio homolog 1 (1189 aa).

Disordered regions lie at residues 24–65, 233–288, 491–525, 614–652, and 743–774; these read QHAQ…SSPV, SCLR…QNGI, QQTT…GQQT, AGTT…NNSL, and GPVG…SSLN. Positions 45 to 58 are enriched in low complexity; the sequence is QAQPQPAANQALAA. Basic and acidic residues predominate over residues 250-277; it reads NDKGDKKNKGTFDGDKLGDLKEEGDVMD. Low complexity predominate over residues 491 to 503; that stretch reads QQTTQQTQQGQQQ. A compositionally biased stretch (polar residues) spans 512 to 525; the sequence is RPLTPNQNQQGQQT. 2 stretches are compositionally biased toward low complexity: residues 627–652 and 764–774; these read QQPQ…NNSL and LSSHGSSSSLN. Residues 829–1171 enclose the PUM-HD domain; that stretch reads GRSRLLEDFR…HILAKLEKYY (343 aa). Pumilio repeat units follow at residues 849–884, 885–920, 921–958, 959–994, 995–1030, 1031–1066, 1067–1102, and 1106–1145; these read EIAG…LVFN, EILQ…ALAE, RIRG…EMVR, ELDG…FIID, AFKG…PILE, ELHQ…KIVA, EIRG…MLID, and TMND…IVMH. The interval 864–868 is adenine-nucleotide binding in RNA target; the sequence is SRFIQ. The uracil-nucleotide binding in RNA target stretch occupies residues 900–904; the sequence is NYVIQ. Residues 936-940 form an adenine-nucleotide binding in RNA target region; the sequence is CRVIQ. Residues 974-978 are non-specific-nucleotide binding in RNA target; it reads NHVVQ. The tract at residues 1010–1014 is adenine-nucleotide binding in RNA target; the sequence is CRVIQ. The interval 1046–1050 is uracil-nucleotide binding in RNA target; that stretch reads NYVIQ. Guanine-nucleotide binding in RNA target regions lie at residues 1082 to 1086 and 1083 to 1086; these read SNVVE and NVVE. Residues 1125-1129 are uracil-nucleotide binding in RNA target; sequence NYVVQ.

In terms of tissue distribution, detected in embryonic male and female gonads, heart, liver and muscle. Detected in adult brain, testis, ovary, heart, lung, spleen, kidney and muscle.

It is found in the cytoplasm. It localises to the P-body. The protein resides in the cytoplasmic granule. Its function is as follows. Sequence-specific RNA-binding protein that acts as a post-transcriptional repressor by binding the 3'-UTR of mRNA targets. Binds to an RNA consensus sequence, the Pumilio Response Element (PRE), 5'-UGUANAUA-3', that is related to the Nanos Response Element (NRE). Mediates post-transcriptional repression of transcripts via different mechanisms: acts via direct recruitment of the CCR4-POP2-NOT deadenylase leading to translational inhibition and mRNA degradation. Also mediates deadenylation-independent repression by promoting accessibility of miRNAs. In Gallus gallus (Chicken), this protein is Pumilio homolog 1 (PUM1).